We begin with the raw amino-acid sequence, 375 residues long: Porin Omp2b (375 aa).

The signal sequence occupies residues 1-22 (MNIKSLLLGSAAALVAASGAQA).

The protein belongs to the alphaproteobacteria porin family. Homotrimer.

The protein resides in the cell outer membrane. Its function is as follows. Forms passive diffusion pores that allow small molecular weight hydrophilic materials across the outer membrane. This Brucella suis protein is Porin Omp2b (omp2b).